The following is a 977-amino-acid chain: MPARWLLLLLALLLPPPGPGSFGRTSTVTLPETLLFVSTLDGSLHAVSKRTGSIKWTLKEDPVLQVPTHVEEPAFLPDPNDGSLYTLGGKNNEGLTKLPFTIPELVQASPCRSSDGILYMGKKQDIWYVIDLLTGEKQQTLSSAFADSLCPSTSLLYLGRTEYTITMYDTKTRELRWNATYFDYAASLPEDDVDYKMSHFVSNGDGLVVTVDSESGDVLWIQNYASPVVAFYVWQGEVLRKVVHINVAVETLRYLTFMSGEVGRITKWKYPFPKETEAKSKLTPTLYVGKYSTSLYASPSMVHEGVAVVPRGSTLPLLEGPQTDGVTIGDKGECVITPSTDLKFDPGLKGKSKLNYLRNYWLLIGHHETPLSASTKMLERFPNNLPKHRENVIPADSEKRSFEEVINIVGQTSDNTPTTVSQDVEEKLARAPAKPEAPVDSMLKDMATIILSTFLLVGWVAFIITYPLSVHQQRQLQHQQFQKELEKIQLLQQQQLPFHPHGDLTQDPEFLDSSGPFSESSGTSSPSPSPRASNHSLHPSSSASRAGTSPSLEQDDEDEETRMVIVGKISFCPKDVLGHGAEGTIVYKGMFDNRDVAVKRILPECFSFADREVQLLRESDEHPNVIRYFCTEKDRQFQYIAIELCAATLQEYVEQKDFAHLGLEPITLLHQTTSGLAHLHSLNIVHRDLKPHNILLSMPNAHGRIKAMISDFGLCKKLAVGRHSFSRRSGVPGTEGWIAPEMLSEDCKDNPTYTVDIFSAGCVFYYVISEGNHPFGKSLQRQANILLGACNLDCFHSDKHEDVIARELIEKMIAMDPQQRPSAKHVLKHPFFWSLEKQLQFFQDVSDRIEKEALDGPIVRQLERGGRAVVKMDWRENITVPLQTDLRKFRTYKGGSVRDLLRAMRNKKHHYRELPVEVQETLGSIPDDFVRYFTSRFPHLLSHTYQAMELCRHERLFQTYYWHEPTEPQPPVIPYAL.

A signal peptide spans 1–20 (MPARWLLLLLALLLPPPGPG). Over 21-445 (SFGRTSTVTL…EAPVDSMLKD (425 aa)) the chain is Lumenal. The N-linked (GlcNAc...) asparagine glycan is linked to asparagine 178. A helical transmembrane segment spans residues 446-466 (MATIILSTFLLVGWVAFIITY). Topologically, residues 467 to 977 (PLSVHQQRQL…PQPPVIPYAL (511 aa)) are cytoplasmic. The disordered stretch occupies residues 498–559 (FHPHGDLTQD…PSLEQDDEDE (62 aa)). The span at 513 to 551 (SSGPFSESSGTSSPSPSPRASNHSLHPSSSASRAGTSPS) shows a compositional bias: low complexity. Residues 571–832 (FCPKDVLGHG…AKHVLKHPFF (262 aa)) form the Protein kinase domain. ATP contacts are provided by residues 577–585 (LGHGAEGTI), lysine 599, and 643–645 (ELC). Residue aspartate 688 is the Proton acceptor; for protein kinase activity of the active site. ATP contacts are provided by residues 690–693 (KPHN) and aspartate 711. Phosphoserine occurs at positions 724 and 729. Positions 835–963 (LEKQLQFFQD…ERLFQTYYWH (129 aa)) constitute a KEN domain. The interacts with hydroxy-aryl-aldehyde inhibitors stretch occupies residues 906–907 (NK).

It belongs to the protein kinase superfamily. Ser/Thr protein kinase family. As to quaternary structure, monomer. Homodimer; disulfide-linked; homodimerization takes place in response to endoplasmic reticulum stress and promotes activation of the kinase and endoribonuclease activities. Dimer formation is driven by hydrophobic interactions within the N-terminal luminal domains and stabilized by disulfide bridges. Interacts (via the luminal region) with DNAJB9/ERdj4; interaction takes place in unstressed cells and promotes recruitment of HSPA5/BiP. Interacts (via the luminal region) with HSPA5/BiP; HSPA5/BiP is a negative regulator of the unfolded protein response (UPR) that prevents homodimerization of ERN1/IRE1 and subsequent activation of the protein. Interaction with HSPA5 also competitively inhibits ERN1 interaction with MANF. Interacts with PDIA6, a negative regulator of the UPR; the interaction is direct and disrupts homodimerization. Interacts with DAB2IP (via PH domain); the interaction occurs in a endoplasmic reticulum stress-induced dependent manner and is required for subsequent recruitment of TRAF2 to ERN1/IRE1. Interacts with TAOK3 and TRAF2. Interacts with RNF13. Interacts with LACC1. Interacts (when unphosphorylated) with DDRGK1; interaction is dependent on UFM1 and takes place in response to endoplasmic reticulum stress, regulating ERN1/IRE1-alpha stability. Interacts (via N-terminus) with P4HB/PDIA1; the interaction is enhanced by phosphorylation of P4HB by FAM20C in response to endoplasmic reticulum stress and results in attenuation of ERN1 activity. Interacts with TMBIM6; this interaction inhibits ERN1 activity. Interacts (via luminal domain) with MANF (via C-terminus); the interaction is decreased in the presence of increasing concentrations of Ca(2+). Requires Mg(2+) as cofactor. Autophosphorylated following homodimerization. Autophosphorylation promotes activation of the endoribonuclease domain. In response to ER stress, phosphorylated at Ser-724, Ser-729 and possibly Ser-726; phosphorylation promotes oligomerization and endoribonuclease activity. Dephosphorylated at Ser-724, Ser-729 and possibly Ser-726 by RPAP2 to abort failed ER-stress adaptation and trigger apoptosis. Phosphorylated at Ser-724; in response to the ER stressor tunicamycin. In terms of processing, ADP-ribosylated by PARP16 upon ER stress, which increases both kinase and endonuclease activities. As to expression, expressed in liver (at protein level). Ubiquitously expressed. High levels in thymus, liver and lung. In the brain, preferentially expressed in cortical, hippocampal and olfactory neurons.

The protein localises to the endoplasmic reticulum membrane. It catalyses the reaction L-seryl-[protein] + ATP = O-phospho-L-seryl-[protein] + ADP + H(+). It carries out the reaction L-threonyl-[protein] + ATP = O-phospho-L-threonyl-[protein] + ADP + H(+). The kinase domain is activated by trans-autophosphorylation following homodimerization. Kinase activity is required for activation of the endoribonuclease domain. Endoribonuclease activity is specifically inhibited by hydroxy-aryl-aldehydes (HAA) MKC9989, OICR464 and OICR573. Serine/threonine-protein kinase and endoribonuclease that acts as a key sensor for the endoplasmic reticulum unfolded protein response (UPR). In unstressed cells, the endoplasmic reticulum luminal domain is maintained in its inactive monomeric state by binding to the endoplasmic reticulum chaperone HSPA5/BiP. Accumulation of misfolded protein in the endoplasmic reticulum causes release of HSPA5/BiP, allowing the luminal domain to homodimerize, promoting autophosphorylation of the kinase domain and subsequent activation of the endoribonuclease activity. The endoribonuclease activity is specific for XBP1 mRNA and excises 26 nucleotides from XBP1 mRNA. The resulting spliced transcript of XBP1 encodes a transcriptional activator protein that up-regulates expression of UPR target genes. Acts as an upstream signal for ER stress-induced GORASP2-mediated unconventional (ER/Golgi-independent) trafficking of CFTR to cell membrane by modulating the expression and localization of SEC16A. In Mus musculus (Mouse), this protein is Serine/threonine-protein kinase/endoribonuclease IRE1.